We begin with the raw amino-acid sequence, 598 residues long: Thiol:disulfide interchange protein DsbD (598 aa).

Positions 1–21 (MRALLTFFVAGLLVLSSPAMA) are cleaved as a signal peptide. Cys-130 and Cys-136 form a disulfide bridge. Residues 158-180 (TMPTQTASPLDTSTANTSTPQPL) form a disordered region. The span at 159–180 (MPTQTASPLDTSTANTSTPQPL) shows a compositional bias: polar residues. The next 8 helical transmembrane spans lie at 198–220 (LLFL…YPIL), 240–262 (LVYV…SAGL), 274–296 (LIGL…TLQL), 324–346 (AISG…LYVA), 353–375 (TGGV…VAVF), 385–407 (GWMD…FLLE), 414–431 (WSTA…GWLY), and 446–468 (AVGI…YWFA). A disulfide bond links Cys-212 and Cys-333. The Thioredoxin domain maps to 456 to 598 (FASAQPALNY…FLEHIQRISN (143 aa)). Cys-513 and Cys-516 are disulfide-bonded.

Belongs to the thioredoxin family. DsbD subfamily.

It localises to the cell inner membrane. The enzyme catalyses [protein]-dithiol + NAD(+) = [protein]-disulfide + NADH + H(+). It catalyses the reaction [protein]-dithiol + NADP(+) = [protein]-disulfide + NADPH + H(+). In terms of biological role, required to facilitate the formation of correct disulfide bonds in some periplasmic proteins and for the assembly of the periplasmic c-type cytochromes. Acts by transferring electrons from cytoplasmic thioredoxin to the periplasm. This transfer involves a cascade of disulfide bond formation and reduction steps. The polypeptide is Thiol:disulfide interchange protein DsbD (Vibrio vulnificus (strain YJ016)).